Consider the following 3661-residue polypeptide: Serine/threonine-protein kinase SMG1 (3661 aa).

The span at Met-1–Ser-11 shows a compositional bias: low complexity. Disordered stretches follow at residues Met-1–Arg-101 and Pro-116–Ser-144. An interaction with SMG8 and SMG9 region spans residues Met-1–Val-1977. Over residues Asn-26 to Ala-35 the composition is skewed to polar residues. 2 stretches are compositionally biased toward basic and acidic residues: residues Gln-69 to Gly-86 and Ala-129 to Glu-138. The residue at position 173 (Lys-173) is an N6-acetyllysine. Residues Arg-1154 to Gly-1165 show a composition bias toward polar residues. The disordered stretch occupies residues Arg-1154–Pro-1175. The 584-residue stretch at Arg-1283–Ser-1866 folds into the FAT domain. One copy of the HEAT repeat lies at Ala-1817–Ser-1852. Residues Glu-1898–Leu-1919 are disordered. The PI3K/PI4K catalytic domain maps to Val-2124–Phe-2463. The segment at Ile-2130–Lys-2136 is G-loop. Positions Gly-2332–Asn-2340 are catalytic loop. The segment at His-2352–Thr-2376 is activation loop. Phosphothreonine is present on Thr-3550. 2 positions are modified to phosphoserine: Ser-3556 and Ser-3570. Polar residues predominate over residues Ala-3568 to Pro-3579. Residues Ala-3568–Lys-3591 form a disordered region. Thr-3573 and Thr-3577 each carry phosphothreonine. The 33-residue stretch at Arg-3629–Val-3661 folds into the FATC domain.

This sequence belongs to the PI3/PI4-kinase family. Component of the SMG1C complex composed of SMG1, SMG8 and SMG9; the recruitment of SMG8 to SMG1 N-terminus induces a large conformational change in the SMG1 C-terminal head domain containing the catalytic domain. Component of the transient SURF (SMG1-UPF1-eRF1-eRF3) complex. Part of a complex composed of SMG1, DHX34 and UPF1; within the complex DHX34 acts as a scaffolding protein to facilitate SMG1 phosphorylation of UPF1. Interacts with PRKCI. Interacts with TELO2 and TTI1. Interacts with RUVBL1 and RUVBL2. Interacts with UPF2. Interacts with DHX34 (via C-terminus); the interaction is RNA-independent. Mn(2+) serves as cofactor. In terms of processing, autophosphorylated. Widely expressed, with highest level in heart and skeletal muscle. Expressed in placenta, brain, lung and spleen, but not in liver.

It is found in the nucleus. The protein localises to the cytoplasm. The enzyme catalyses L-seryl-[protein] + ATP = O-phospho-L-seryl-[protein] + ADP + H(+). The catalysed reaction is L-threonyl-[protein] + ATP = O-phospho-L-threonyl-[protein] + ADP + H(+). With respect to regulation, inhibited by caffeine, LY294002 and wortmannin. Its function is as follows. Serine/threonine protein kinase involved in both mRNA surveillance and genotoxic stress response pathways. Recognizes the substrate consensus sequence [ST]-Q. Plays a central role in nonsense-mediated decay (NMD) of mRNAs containing premature stop codons by phosphorylating UPF1/RENT1. Recruited by release factors to stalled ribosomes together with SMG8 and SMG9 (forming the SMG1C protein kinase complex), and UPF1 to form the transient SURF (SMG1-UPF1-eRF1-eRF3) complex. In EJC-dependent NMD, the SURF complex associates with the exon junction complex (EJC) through UPF2 and allows the formation of an UPF1-UPF2-UPF3 surveillance complex which is believed to activate NMD. Also acts as a genotoxic stress-activated protein kinase that displays some functional overlap with ATM. Can phosphorylate p53/TP53 and is required for optimal p53/TP53 activation after cellular exposure to genotoxic stress. Its depletion leads to spontaneous DNA damage and increased sensitivity to ionizing radiation (IR). May activate PRKCI but not PRKCZ. The chain is Serine/threonine-protein kinase SMG1 from Homo sapiens (Human).